Here is a 75-residue protein sequence, read N- to C-terminus: Mating pheromone Er-1/Er-3 (75 aa).

An N-terminal signal peptide occupies residues methionine 1–alanine 19. A propeptide spanning residues phenylalanine 20–glycine 35 is cleaved from the precursor. Cystine bridges form between cysteine 38–cysteine 54, cysteine 45–cysteine 71, and cysteine 50–cysteine 63.

Homodimer.

The protein resides in the secreted. It is found in the cell membrane. Mating ciliate pheromones (or gamones) are diffusible extracellular communication signals that distinguish different intraspecific classes of cells commonly referred to as 'mating types'. They prepare the latter for conjugation by changing their cell surface properties. The membrane-bound form promotes inter-cellular communication and adhesion for mating pair formation and may act as binding site for the secreted form. The sequence is that of Mating pheromone Er-1/Er-3 (MAT1) from Euplotes raikovi.